Here is a 214-residue protein sequence, read N- to C-terminus: Redox-sensing transcriptional repressor Rex (214 aa).

Residues 16 to 55 (IYFRYLNVLKDANKQRVSSTELSEAVQVDSATIRRDFSYF) constitute a DNA-binding region (H-T-H motif). 90-95 (GVGSLG) serves as a coordination point for NAD(+).

The protein belongs to the transcriptional regulatory Rex family. As to quaternary structure, homodimer.

It is found in the cytoplasm. Its function is as follows. Modulates transcription in response to changes in cellular NADH/NAD(+) redox state. The sequence is that of Redox-sensing transcriptional repressor Rex from Limosilactobacillus reuteri (strain DSM 20016) (Lactobacillus reuteri).